A 156-amino-acid chain; its full sequence is Small ribosomal subunit protein uS7 (156 aa).

It belongs to the universal ribosomal protein uS7 family. Part of the 30S ribosomal subunit. Contacts proteins S9 and S11.

Its function is as follows. One of the primary rRNA binding proteins, it binds directly to 16S rRNA where it nucleates assembly of the head domain of the 30S subunit. Is located at the subunit interface close to the decoding center, probably blocks exit of the E-site tRNA. In Salmonella choleraesuis (strain SC-B67), this protein is Small ribosomal subunit protein uS7.